The primary structure comprises 211 residues: Protein-L-isoaspartate O-methyltransferase (211 aa).

The active site involves Ser-62.

The protein belongs to the methyltransferase superfamily. L-isoaspartyl/D-aspartyl protein methyltransferase family.

It is found in the cytoplasm. The catalysed reaction is [protein]-L-isoaspartate + S-adenosyl-L-methionine = [protein]-L-isoaspartate alpha-methyl ester + S-adenosyl-L-homocysteine. Functionally, catalyzes the methyl esterification of L-isoaspartyl residues in peptides and proteins that result from spontaneous decomposition of normal L-aspartyl and L-asparaginyl residues. It plays a role in the repair and/or degradation of damaged proteins. The chain is Protein-L-isoaspartate O-methyltransferase from Shewanella sp. (strain MR-4).